We begin with the raw amino-acid sequence, 616 residues long: Large ribosomal subunit assembly factor BipA (616 aa).

One can recognise a tr-type G domain in the interval 8–204; it reads KKLRNIAIIA…AIVKHVEPPK (197 aa). GTP contacts are provided by residues 20 to 25 and 134 to 137; these read DHGKTT and NKVD.

Belongs to the TRAFAC class translation factor GTPase superfamily. Classic translation factor GTPase family. BipA subfamily. Monomer.

It is found in the cytoplasm. It carries out the reaction GTP + H2O = GDP + phosphate + H(+). Functionally, a 50S ribosomal subunit assembly protein with GTPase activity, required for 50S subunit assembly at low temperatures, may also play a role in translation. Binds GTP and analogs. Binds the 70S ribosome between the 30S and 50S subunits, in a similar position as ribosome-bound EF-G; it contacts a number of ribosomal proteins, both rRNAs and the A-site tRNA. The chain is Large ribosomal subunit assembly factor BipA from Haemophilus influenzae (strain ATCC 51907 / DSM 11121 / KW20 / Rd).